Reading from the N-terminus, the 346-residue chain is Glucose-6-phosphatase 3 (346 aa).

Residues 1-24 (MESTLGAGIAMAEALQNQLPWLEN) lie on the Lumenal side of the membrane. The helical transmembrane segment at 25–45 (VWLWVTFLGDPKSLFLFYFPA) threads the bilayer. Topologically, residues 46 to 54 (AYYASRRVG) are cytoplasmic. A helical transmembrane segment spans residues 55–75 (IAVLWISLITEWLNLVFKWFL). Residues 76 to 108 (FGDRPFWWVHESGYYSQAPAQVHQFPSSCETGP) lie on the Lumenal side of the membrane. Arg-79 provides a ligand contact to substrate. A helical membrane pass occupies residues 109 to 129 (GSPSGHCMITGAALWPIMTAV). The Proton donor role is filled by His-114. Over 130-140 (SSQMATRAHSR) the chain is Cytoplasmic. A helical membrane pass occupies residues 141–162 (WVRVIPSLAYCTFLLAVGLSRV). Arg-161 is a binding site for substrate. The Lumenal segment spans residues 163 to 167 (FLLAH). The active-site Nucleophile is the His-167. A helical membrane pass occupies residues 168 to 186 (FPHQVLAGLITGAVLGWLM). Residues 187–197 (TPQVPMERELS) lie on the Cytoplasmic side of the membrane. Residues 198–218 (FYGLTSLALLLGASLIYWTLF) form a helical membrane-spanning segment. The Lumenal segment spans residues 219–254 (TLGLDLSWSINLASKWCERPEWVHLDSRPFASLSRD). A helical transmembrane segment spans residues 255-273 (SGAALGLGIALHSPCYAQV). Topologically, residues 274-283 (RRAHLGYGQK) are cytoplasmic. The helical transmembrane segment at 284 to 304 (LVCLVLAMGLLGPLNWLGYPP) threads the bilayer. Residues 305 to 307 (QIS) are Lumenal-facing. A helical transmembrane segment spans residues 308-328 (LFYIFNFLKYTLWPCLVLALV). The Cytoplasmic segment spans residues 329-346 (PWLVHMFSAQEAPPIRSS).

It belongs to the glucose-6-phosphatase family.

The protein resides in the endoplasmic reticulum membrane. It carries out the reaction D-glucose 6-phosphate + H2O = D-glucose + phosphate. It participates in carbohydrate biosynthesis; gluconeogenesis. With respect to regulation, inhibited by vanadate. Functionally, hydrolyzes glucose-6-phosphate to glucose in the endoplasmic reticulum. May form with the glucose-6-phosphate transporter (SLC37A4/G6PT) a ubiquitously expressed complex responsible for glucose production through glycogenolysis and gluconeogenesis. Probably required for normal neutrophil function. The sequence is that of Glucose-6-phosphatase 3 (G6PC3) from Bos taurus (Bovine).